Reading from the N-terminus, the 695-residue chain is Elongation factor G 1 (695 aa).

The 279-residue stretch at 6-284 (KKVRNIGISA…VTRYLPCPAD (279 aa)) folds into the tr-type G domain. Residues 15–22 (AHIDSGKT), 82–86 (DTPGH), and 136–139 (NKCD) each bind GTP.

Belongs to the TRAFAC class translation factor GTPase superfamily. Classic translation factor GTPase family. EF-G/EF-2 subfamily.

The protein resides in the cytoplasm. Catalyzes the GTP-dependent ribosomal translocation step during translation elongation. During this step, the ribosome changes from the pre-translocational (PRE) to the post-translocational (POST) state as the newly formed A-site-bound peptidyl-tRNA and P-site-bound deacylated tRNA move to the P and E sites, respectively. Catalyzes the coordinated movement of the two tRNA molecules, the mRNA and conformational changes in the ribosome. The chain is Elongation factor G 1 from Syntrophus aciditrophicus (strain SB).